Reading from the N-terminus, the 151-residue chain is ATP synthase subunit b' (151 aa).

A helical transmembrane segment spans residues T18–F38.

This sequence belongs to the ATPase B chain family. In terms of assembly, F-type ATPases have 2 components, F(1) - the catalytic core - and F(0) - the membrane proton channel. F(1) has five subunits: alpha(3), beta(3), gamma(1), delta(1), epsilon(1). F(0) has four main subunits: a(1), b(1), b'(1) and c(10-14). The alpha and beta chains form an alternating ring which encloses part of the gamma chain. F(1) is attached to F(0) by a central stalk formed by the gamma and epsilon chains, while a peripheral stalk is formed by the delta, b and b' chains.

The protein localises to the cellular thylakoid membrane. F(1)F(0) ATP synthase produces ATP from ADP in the presence of a proton or sodium gradient. F-type ATPases consist of two structural domains, F(1) containing the extramembraneous catalytic core and F(0) containing the membrane proton channel, linked together by a central stalk and a peripheral stalk. During catalysis, ATP synthesis in the catalytic domain of F(1) is coupled via a rotary mechanism of the central stalk subunits to proton translocation. In terms of biological role, component of the F(0) channel, it forms part of the peripheral stalk, linking F(1) to F(0). The b'-subunit is a diverged and duplicated form of b found in plants and photosynthetic bacteria. The sequence is that of ATP synthase subunit b' from Prochlorococcus marinus (strain MIT 9313).